The primary structure comprises 668 residues: MKHYSIQPANLEFNAEGTPVSRDFDDVYFSNDNGLEETRYVFLGGNHLEARFPEHPHPLFVVAESGFGTGLNFLTLWQAFDQFREAHPQAQLQRLHFISFEKFPLTRADLALAHQHWPELAPWAEQLQAQWPLPLPGCHRLLLDEGHVTLDLWFGDINELTSQLDDSLNQKVDAWFLDGFAPAKNPDMWTQNLFNAMARLARPGSTLATFTSAGFVRRGLQEAGFTMQKRKGFGRKREMLCGVMEQTLPFPCSTPWFNRMGSNKQEAAIIGGGIASALLSLALLRRGWQVTLYCADEAPALGASGNRQGALYPLLSKHDEALNRFFSNAFTFARRFYDLLPVKFDHDWCGVTQLGWDEKSQHKIAQMLSMDLPAELAVAVEANAVEQITGVATNCSGITYPQGGWLCPAELTRNVLELAQQQGLQIHYQHQLQDLSRKDDGWLLNFAGDQHATHSVVVLANGHQISGFSQTSSLPVYSVAGQVSHIPTTPELAKLKQVLCYDGYLTPQNPANQHHCIGASYHRGSEETAYSDEDQQQNRQRLIDCFPQVQWAKEVDVSGKEARCGVRCATRDHLPMVGNVPDYDATLVEYASLAEKKDEAVSAPVYDDLFMFAALGSRGLCSAPLCAEILAAQMSEEPIPMDASTLAALNPNRLWVRKLLKGKAVKAG.

Residues 1–245 are tRNA (mnm(5)s(2)U34)-methyltransferase; it reads MKHYSIQPAN…KREMLCGVME (245 aa). The FAD-dependent cmnm(5)s(2)U34 oxidoreductase stretch occupies residues 270-668; the sequence is IGGGIASALL…LLKGKAVKAG (399 aa).

The protein in the N-terminal section; belongs to the methyltransferase superfamily. tRNA (mnm(5)s(2)U34)-methyltransferase family. This sequence in the C-terminal section; belongs to the DAO family. It depends on FAD as a cofactor.

The protein localises to the cytoplasm. The catalysed reaction is 5-aminomethyl-2-thiouridine(34) in tRNA + S-adenosyl-L-methionine = 5-methylaminomethyl-2-thiouridine(34) in tRNA + S-adenosyl-L-homocysteine + H(+). Functionally, catalyzes the last two steps in the biosynthesis of 5-methylaminomethyl-2-thiouridine (mnm(5)s(2)U) at the wobble position (U34) in tRNA. Catalyzes the FAD-dependent demodification of cmnm(5)s(2)U34 to nm(5)s(2)U34, followed by the transfer of a methyl group from S-adenosyl-L-methionine to nm(5)s(2)U34, to form mnm(5)s(2)U34. The polypeptide is tRNA 5-methylaminomethyl-2-thiouridine biosynthesis bifunctional protein MnmC (Escherichia coli O6:H1 (strain CFT073 / ATCC 700928 / UPEC)).